The chain runs to 160 residues: Protein max (160 aa).

Over residues methionine 1 to glutamate 13 the composition is skewed to acidic residues. The interval methionine 1–lysine 40 is disordered. Serine 2 carries the N-acetylserine modification. A phosphoserine mark is found at serine 2 and serine 11. The bHLH domain maps to aspartate 23–methionine 74. A compositionally biased stretch (basic and acidic residues) spans asparagine 29 to lysine 40. The residue at position 66 (lysine 66) is an N6-acetyllysine. The interval histidine 81–leucine 102 is leucine-zipper. The tract at residues alanine 105–serine 160 is disordered. Serine 107 is subject to Phosphoserine. The span at serine 107–threonine 124 shows a compositional bias: polar residues. N6-acetyllysine occurs at positions 153 and 154.

The protein belongs to the MAX family. In terms of assembly, efficient DNA binding requires dimerization with another bHLH protein. Binds DNA as a heterodimer with MYC or MAD. Part of the E2F6.com-1 complex in G0 phase composed of E2F6, MGA, MAX, TFDP1, CBX3, BAT8, EUHMTASE1, RING1, RNF2, MBLR, L3MBTL2 and YAF2. Component of some MLL1/MLL complex, at least composed of the core components KMT2A/MLL1, ASH2L, HCFC1/HCF1, WDR5 and RBBP5, as well as the facultative components BACC1, CHD8, E2F6, HSP70, INO80C, KANSL1, LAS1L, MAX, MCRS1, MGA, MYST1/MOF, PELP1, PHF20, PRP31, RING2, RUVB1/TIP49A, RUVB2/TIP49B, SENP3, TAF1, TAF4, TAF6, TAF7, TAF9 and TEX10. Interacts with SPAG9. The heterodimer MYC:MAX interacts with ABI1; the interaction may enhance MYC:MAX transcriptional activity. Post-translationally, phosphorylated.

The protein resides in the nucleus. It localises to the cell projection. The protein localises to the dendrite. Transcription regulator. Forms a sequence-specific DNA-binding protein complex with MYC or MAD which recognizes the core sequence 5'-CAC[GA]TG-3'. The MYC:MAX complex is a transcriptional activator, whereas the MAD:MAX complex is a repressor. May repress transcription via the recruitment of a chromatin remodeling complex containing H3 'Lys-9' histone methyltransferase activity. Represses MYC transcriptional activity from E-box elements. This Rattus norvegicus (Rat) protein is Protein max.